We begin with the raw amino-acid sequence, 383 residues long: Mannan endo-1,4-beta-mannosidase (383 aa).

The first 35 residues, 1-35 (MRNARSTLITTAGMAFAVLGLLFALAGPSAGRAEA), serve as a signal peptide directing secretion. The CBM10 domain occupies 339–377 (GGSTGGTAPNGYPYCVNGGASDPDGDGWGWENSRSCVVR).

This sequence belongs to the glycosyl hydrolase 5 (cellulase A) family. In terms of assembly, monomer.

It carries out the reaction Random hydrolysis of (1-&gt;4)-beta-D-mannosidic linkages in mannans, galactomannans and glucomannans.. The protein is Mannan endo-1,4-beta-mannosidase (manA) of Streptomyces lividans.